The primary structure comprises 211 residues: Large ribosomal subunit protein uL4 (211 aa).

Residues 46-55 (GNHATKTRSM) are compositionally biased toward polar residues. A disordered region spans residues 46 to 89 (GNHATKTRSMVSGGGKKPWSQKGTGRARQGSTRAPHWVGGGTVH).

This sequence belongs to the universal ribosomal protein uL4 family. As to quaternary structure, part of the 50S ribosomal subunit.

Functionally, one of the primary rRNA binding proteins, this protein initially binds near the 5'-end of the 23S rRNA. It is important during the early stages of 50S assembly. It makes multiple contacts with different domains of the 23S rRNA in the assembled 50S subunit and ribosome. Forms part of the polypeptide exit tunnel. The sequence is that of Large ribosomal subunit protein uL4 from Leptospira interrogans serogroup Icterohaemorrhagiae serovar copenhageni (strain Fiocruz L1-130).